Reading from the N-terminus, the 127-residue chain is Small ribosomal subunit protein uS11 (127 aa).

This sequence belongs to the universal ribosomal protein uS11 family. In terms of assembly, part of the 30S ribosomal subunit. Interacts with proteins S7 and S18. Binds to IF-3.

Its function is as follows. Located on the platform of the 30S subunit, it bridges several disparate RNA helices of the 16S rRNA. Forms part of the Shine-Dalgarno cleft in the 70S ribosome. The protein is Small ribosomal subunit protein uS11 of Chlorobium limicola (strain DSM 245 / NBRC 103803 / 6330).